The chain runs to 365 residues: tRNA N6-adenosine threonylcarbamoyltransferase (365 aa).

2 residues coordinate Fe cation: His119 and His123. Substrate is bound by residues 141 to 145 (LVSGG), Asp174, Gly187, and Asn288. Asp316 serves as a coordination point for Fe cation.

It belongs to the KAE1 / TsaD family. Requires Fe(2+) as cofactor.

Its subcellular location is the cytoplasm. It carries out the reaction L-threonylcarbamoyladenylate + adenosine(37) in tRNA = N(6)-L-threonylcarbamoyladenosine(37) in tRNA + AMP + H(+). Required for the formation of a threonylcarbamoyl group on adenosine at position 37 (t(6)A37) in tRNAs that read codons beginning with adenine. Is involved in the transfer of the threonylcarbamoyl moiety of threonylcarbamoyl-AMP (TC-AMP) to the N6 group of A37, together with TsaE and TsaB. TsaD likely plays a direct catalytic role in this reaction. The sequence is that of tRNA N6-adenosine threonylcarbamoyltransferase from Rhizobium etli (strain ATCC 51251 / DSM 11541 / JCM 21823 / NBRC 15573 / CFN 42).